The primary structure comprises 200 residues: Nascent polypeptide-associated complex subunit alpha (200 aa).

Residues 1-19 (MADPRIEELPDEETKKPTV) are compositionally biased toward basic and acidic residues. 2 disordered regions span residues 1–52 (MADP…SRNE) and 120–165 (QQLA…EDKD). Positions 20–34 (EELDESSDEESDAEA) are enriched in acidic residues. Residues 49–114 (SRNEKKARKA…AKIEDLNASA (66 aa)) form the NAC-A/B domain. Basic and acidic residues predominate over residues 127–143 (AEHDHAGHTHDHKHEAA). A compositionally biased stretch (acidic residues) spans 144 to 160 (KEEEEEEDDGEEVDAEG). The UBA domain occupies 161–200 (IEDKDIELVMTQANVSRKKAIKALKENDNDIVNSIMALSV).

The protein belongs to the NAC-alpha family. Part of the nascent polypeptide-associated complex (NAC), consisting of EGD2 and EGD1. NAC associates with ribosomes via EGD1.

It is found in the cytoplasm. Its subcellular location is the nucleus. Functionally, component of the nascent polypeptide-associated complex (NAC), a dynamic component of the ribosomal exit tunnel, protecting the emerging polypeptides from interaction with other cytoplasmic proteins to ensure appropriate nascent protein targeting. The NAC complex also promotes mitochondrial protein import by enhancing productive ribosome interactions with the outer mitochondrial membrane and blocks the inappropriate interaction of ribosomes translating non-secretory nascent polypeptides with translocation sites in the membrane of the endoplasmic reticulum. EGD2 may also be involved in transcription regulation. This is Nascent polypeptide-associated complex subunit alpha (EGD2) from Chaetomium globosum (strain ATCC 6205 / CBS 148.51 / DSM 1962 / NBRC 6347 / NRRL 1970) (Soil fungus).